Reading from the N-terminus, the 523-residue chain is Apoptosis inhibitor 5-B (523 aa).

The interval 1 to 360 (MPTVEELYRN…HQLGRKLPDF (360 aa)) is ARM-like and Heat-like helical repeats. The segment at 446 to 523 (VQKTDSGQKR…RGNRSRGRIY (78 aa)) is disordered. A Nuclear localization signal motif is present at residues 454 to 475 (KRMSDETSSTSPPKKPVVGPKR). Positions 502-515 (GFQGGRGRGWGGRG) are enriched in gly residues.

It belongs to the API5 family. In terms of assembly, monomer.

It is found in the nucleus. May be an antiapoptotic factor. In Xenopus laevis (African clawed frog), this protein is Apoptosis inhibitor 5-B (api5-b).